We begin with the raw amino-acid sequence, 363 residues long: Type-2 angiotensin II receptor (363 aa).

Topologically, residues 1–45 are extracellular; it reads MKDNFSFAATSRNITSSLPFDNLNATGTNESAFNCSHKPADKHLE. 5 N-linked (GlcNAc...) asparagine glycosylation sites follow: asparagine 4, asparagine 13, asparagine 24, asparagine 29, and asparagine 34. Cystine bridges form between cysteine 35–cysteine 290 and cysteine 117–cysteine 195. A helical transmembrane segment spans residues 46 to 70; that stretch reads AIPVLYYMIFVIGFAVNIVVVSLFC. Over 71–80 the chain is Cytoplasmic; the sequence is CQKGPKKVSS. A helical transmembrane segment spans residues 81–104; that stretch reads IYIFNLAVADLLLLATLPLWATYY. 2 residues coordinate angiotensin II: tyrosine 103 and tyrosine 104. Residues 105–114 lie on the Extracellular side of the membrane; it reads SYRYDWLFGP. The chain crosses the membrane as a helical span at residues 115-140; that stretch reads VMCKVFGSFLTLNMFASIFFITCMSV. Residues 141-159 are Cytoplasmic-facing; sequence DRYQSVIYPFLSQRRNPWQ. Residues 160–181 form a helical membrane-spanning segment; the sequence is ASYVVPLVWCMACLSSLPTFYF. Residues arginine 182, tyrosine 204, and lysine 215 each coordinate angiotensin II. Topologically, residues 182–206 are extracellular; sequence RDVRTIEYLGVNACIMAFPPEKYAQ. Residues 207 to 232 traverse the membrane as a helical segment; the sequence is WSAGIALMKNILGFIIPLIFIATCYF. At 233-257 the chain is on the cytoplasmic side; it reads GIRKHLLKTNSYGKNRITRDQVLKM. The chain crosses the membrane as a helical span at residues 258–281; sequence AAAVVLAFIICWLPFHVLTFLDAL. Aspartate 279 is a binding site for angiotensin II. The Extracellular portion of the chain corresponds to 282-294; the sequence is TWMGIINSCEVIA. A helical membrane pass occupies residues 295 to 320; sequence VIDLALPFAILLGFTNSCVNPFLYCF. Aspartate 297 lines the angiotensin II pocket. The Cytoplasmic segment spans residues 321 to 363; that stretch reads VGNRFQQKLRSVFRVPITWLQGKRETMSCRKSSSLREMDTFVS. Residues 324 to 333 are helix VIII; it reads RFQQKLRSVF. At serine 354 the chain carries Phosphoserine; by PKC.

This sequence belongs to the G-protein coupled receptor 1 family. As to quaternary structure, interacts with MTUS1. Abundant expression in fetal tissues, immature brain, skin wound and atretic ovarian follicles.

The protein localises to the cell membrane. Its function is as follows. Receptor for angiotensin II, a vasoconstricting peptide. Signals primarily via a non-canonical G-protein- and beta-arrestin independent pathways. Cooperates with MTUS1 to inhibit ERK2 activation and cell proliferation. This Rattus norvegicus (Rat) protein is Type-2 angiotensin II receptor.